A 204-amino-acid chain; its full sequence is dITP/XTP pyrophosphatase (204 aa).

7–12 lines the substrate pocket; it reads TNNKDK. Mg(2+)-binding residues include Asp-38 and Asp-74. Asp-74 functions as the Proton acceptor in the catalytic mechanism. Substrate is bound by residues Ser-75, 156–159, Lys-179, and 184–185; these read FGYD and HR.

Belongs to the HAM1 NTPase family. Homodimer. Mg(2+) is required as a cofactor.

The enzyme catalyses XTP + H2O = XMP + diphosphate + H(+). It catalyses the reaction dITP + H2O = dIMP + diphosphate + H(+). The catalysed reaction is ITP + H2O = IMP + diphosphate + H(+). Its function is as follows. Pyrophosphatase that catalyzes the hydrolysis of nucleoside triphosphates to their monophosphate derivatives, with a high preference for the non-canonical purine nucleotides XTP (xanthosine triphosphate), dITP (deoxyinosine triphosphate) and ITP. Seems to function as a house-cleaning enzyme that removes non-canonical purine nucleotides from the nucleotide pool, thus preventing their incorporation into DNA/RNA and avoiding chromosomal lesions. This chain is dITP/XTP pyrophosphatase, found in Campylobacter fetus subsp. fetus (strain 82-40).